Here is a 227-residue protein sequence, read N- to C-terminus: Putative ankyrin repeat protein L45 (227 aa).

6 ANK repeats span residues 38–66 (FETNIIEYVVENNLLDILRHIIFLKNINH), 78–107 (CLEESLNASCKNGKLEIVKLLVDLGANIFH), 108–137 (NENCAMMLASEYGHIEIVEYLVSKGSDVRA), 139–167 (NDYAVIYASKNGHLEIVKYLVSQGCDVRS), 168–197 (CDSYAVRLASEYGHLEIVKFLVKKGANYRA), and 199–227 (NHHAVIEASKNKHYEIVEFLMNYSTGITK).

This is Putative ankyrin repeat protein L45 from Acanthamoeba polyphaga mimivirus (APMV).